The following is a 1737-amino-acid chain: Complement C4 (1737 aa).

An N-terminal signal peptide occupies residues methionine 1–glutamine 19. A disulfide bond links cysteine 66 and cysteine 95. N-linked (GlcNAc...) asparagine glycosylation is found at asparagine 224 and asparagine 664. A disulfide bridge connects residues cysteine 633 and cysteine 667. Residues arginine 674–arginine 677 constitute a propeptide that is removed on maturation. Disulfide bonds link cysteine 700–cysteine 726, cysteine 701–cysteine 733, and cysteine 714–cysteine 734. One can recognise an Anaphylatoxin-like domain in the interval cysteine 700–cysteine 734. The N-linked (GlcNAc...) asparagine glycan is linked to asparagine 743. Residues cysteine 1005–glutamine 1008 constitute a cross-link (isoglutamyl cysteine thioester (Cys-Gln)). Residues asparagine 1323 and asparagine 1386 are each glycosylated (N-linked (GlcNAc...) asparagine). Sulfotyrosine occurs at positions 1412, 1414, and 1416. A propeptide spanning residues arginine 1443–arginine 1446 is cleaved from the precursor. 5 disulfides stabilise this stretch: cysteine 1464-cysteine 1528, cysteine 1576-cysteine 1581, cysteine 1588-cysteine 1666, cysteine 1611-cysteine 1735, and cysteine 1711-cysteine 1720. The NTR domain maps to cysteine 1588–cysteine 1735. Tyrosine 1676 carries the sulfotyrosine modification.

In absence of complement activation, circulates in blood as a disulfide-linked trimer of an alpha, beta and gamma chain. In terms of assembly, complement C4b is composed of complement C4b-A, complement C4 beta and complement C4 gamma chains that are associated via disulfide bonds. Non-enzymatic component of the C3 convertase, also named C4bC2b, composed of the serine protease complement C2b (C2), as well as complement C4b. Non-enzymatic component of the C5 convertase, also named C4bC2bC3b, composed of the serine protease complement C2b (C2), complement C3b, as well as complement C4b. Prior to secretion, the single-chain precursor is enzymatically cleaved by plasminogen (PLG) to yield non-identical chains alpha, beta and gamma. During activation of the complement systems, the alpha chain is cleaved into C4a and C4b by different proteases depending on the complement pathway: C4b stays linked to the beta and gamma chains, while C4a is released in the plasma. The alpha chain is cleaved by C1S to generate C4a and C4b following activation by the classical complement system. The alpha chain is cleaved to generate C4a and C4b by MASP2 following activation by the lectin complement system. The alpha chain is cleaved by GZMK to generate C4a and C4b following activation by the GZMK complement system. Further degradation of C4b by C1 into the inactive fragments C4c and C4d blocks the generation of C3 convertase. The proteolytic cleavages often are incomplete so that many structural forms can be found in plasma. Post-translationally, upon activation, the internal thioester bond reacts with carbohydrate antigens on the target surface to form amide or ester bonds, leading to covalent association with the surface of pathogens. In terms of processing, complement C4b interacts with complement C3b via a thioester linkage. N- and O-glycosylated. O-glycosylated with a core 1 or possibly core 8 glycan.

It is found in the secreted. Its subcellular location is the cell surface. Precursor of non-enzymatic components of the classical, lectin and GZMK complement pathways, which consist in a cascade of proteins that leads to phagocytosis and breakdown of pathogens and signaling that strengthens the adaptive immune system. Its function is as follows. Non-enzymatic component of C3 and C5 convertases. Generated following cleavage by complement proteases (C1S, MASP2 or GZMK, depending on the complement pathway), it covalently attaches to the surface of pathogens, where it acts as an opsonin that marks the surface of antigens for removal. It then recruits the serine protease complement C2b to form the C3 and C5 convertases, which cleave and activate C3 and C5, respectively, the next components of the complement pathways. Complement C4b-A isotype is responsible for effective binding to form amide bonds with immune aggregates or protein antigens, while complement C4b-B isotype catalyzes the transacylation of the thioester carbonyl group to form ester bonds with carbohydrate antigens. Functionally, putative humoral mediator released following cleavage by complement proteases (C1S, MASP2 or GZMK, depending on the complement pathway). While it is strongly similar to anaphylatoxins, its role is unclear. Was reported to act as a mediator of local inflammatory process; however these effects were probably due to contamination with C3a and/C5a anaphylatoxins in biological assays. This is Complement C4 from Rattus norvegicus (Rat).